Consider the following 265-residue polypeptide: Uronate dehydrogenase (265 aa).

Residues Q12 to L13, D32 to S34, D49 to L50, and L69 to S73 each bind NAD(+). Substrate contacts are provided by residues S73 and S109–H111. The active-site Proton acceptor is Y134. K138 is a binding site for NAD(+). Residue S163 coordinates substrate. C164 is an NAD(+) binding site. R172 serves as a coordination point for substrate.

Belongs to the NAD(P)-dependent epimerase/dehydratase family. Homohexamer.

It catalyses the reaction beta-D-galacturonate + NAD(+) = D-galactaro-1,5-lactone + NADH + H(+). The catalysed reaction is beta-D-glucuronate + NAD(+) = D-glucaro-1,5-lactone + NADH + H(+). Its pathway is carbohydrate acid metabolism; D-galacturonate degradation via prokaryotic oxidative pathway. In terms of biological role, catalyzes the oxidation of D-galacturonate and D-glucuronate to galactarate and D-glucarate, respectively. In fact, in water solution the substrate D-galacturonate is predominantly in pyranosic form whose beta anomer is converted by the enzyme to D-galactaro-1,5-lactone; in solution, this reaction product rearranges to the more stable D-galactaro-1,4-lactone. Makes part of the oxidative degradation pathway of D-galacturonate, which allows A.tumefaciens to utilize D-galacturonate as a sole carbon source. Cannot use NADP(+) instead of NAD(+) as cosubstrate. Is not active on D-galactose, D-glucose, D-galactonate and D-gluconate. The chain is Uronate dehydrogenase (udh) from Agrobacterium fabrum (strain C58 / ATCC 33970) (Agrobacterium tumefaciens (strain C58)).